We begin with the raw amino-acid sequence, 133 residues long: Profilin-3 (133 aa).

An intrachain disulfide couples Cys-13 to Cys-117. Positions 83 to 99 match the Involved in PIP2 interaction motif; it reads AVIRGKKGSGGITIKKT. The residue at position 113 (Thr-113) is a Phosphothreonine.

This sequence belongs to the profilin family. As to quaternary structure, occurs in many kinds of cells as a complex with monomeric actin in a 1:1 ratio. In terms of processing, phosphorylated by MAP kinases.

The protein localises to the cytoplasm. Its subcellular location is the cytoskeleton. In terms of biological role, binds to actin and affects the structure of the cytoskeleton. At high concentrations, profilin prevents the polymerization of actin, whereas it enhances it at low concentrations. The polypeptide is Profilin-3 (Corylus avellana (European hazel)).